Reading from the N-terminus, the 317-residue chain is Cytochrome f (317 aa).

Residues 1–34 form the signal peptide; sequence MKGLKNQIMKKTSLFICTLLFISSIVFHPKITFA. Heme-binding residues include tyrosine 35, cysteine 55, cysteine 58, and histidine 59. Residues 284-304 traverse the membrane as a helical segment; it reads VIGLIAFFIGVGLTQILLVLK.

It belongs to the cytochrome f family. As to quaternary structure, the 4 large subunits of the cytochrome b6-f complex are cytochrome b6, subunit IV (17 kDa polypeptide, PetD), cytochrome f and the Rieske protein, while the 4 small subunits are PetG, PetL, PetM and PetN. The complex functions as a dimer. Requires heme as cofactor.

Its subcellular location is the cellular thylakoid membrane. Functionally, component of the cytochrome b6-f complex, which mediates electron transfer between photosystem II (PSII) and photosystem I (PSI), cyclic electron flow around PSI, and state transitions. The protein is Cytochrome f of Prochlorococcus marinus (strain MIT 9301).